The chain runs to 336 residues: Glyceraldehyde-3-phosphate dehydrogenase 1 (336 aa).

NAD(+)-binding positions include 13 to 14 and aspartate 35; that span reads RI. A Phosphoserine modification is found at serine 59. Arginine 80 is an NAD(+) binding site. Serine 125 is modified (phosphoserine). D-glyceraldehyde 3-phosphate-binding positions include 151–153, threonine 182, 211–212, and arginine 234; these read SCT and TG. Cysteine 152 (nucleophile) is an active-site residue. An NAD(+)-binding site is contributed by asparagine 316.

It belongs to the glyceraldehyde-3-phosphate dehydrogenase family. In terms of assembly, homotetramer.

The protein resides in the cytoplasm. The enzyme catalyses D-glyceraldehyde 3-phosphate + phosphate + NAD(+) = (2R)-3-phospho-glyceroyl phosphate + NADH + H(+). The protein operates within carbohydrate degradation; glycolysis; pyruvate from D-glyceraldehyde 3-phosphate: step 1/5. This is Glyceraldehyde-3-phosphate dehydrogenase 1 (tdh1) from Schizosaccharomyces pombe (strain 972 / ATCC 24843) (Fission yeast).